The chain runs to 179 residues: uncharacterized protein (179 aa).

A disordered region spans residues 27-54 (TAKKSRVQAREARAAVEENKKAQLERDK).

This is an uncharacterized protein from Escherichia coli (strain K12).